The primary structure comprises 278 residues: Shikimate dehydrogenase (NADP(+)) (278 aa).

Shikimate contacts are provided by residues 14–16 (SKS) and Thr-61. The Proton acceptor role is filled by Lys-65. Shikimate-binding residues include Asn-86 and Asp-102. Residues 127 to 131 (GAGGA), 151 to 156 (NRTASK), and Met-221 each bind NADP(+). Tyr-223 is a binding site for shikimate. Gly-245 is an NADP(+) binding site.

It belongs to the shikimate dehydrogenase family. In terms of assembly, homodimer.

It catalyses the reaction shikimate + NADP(+) = 3-dehydroshikimate + NADPH + H(+). It functions in the pathway metabolic intermediate biosynthesis; chorismate biosynthesis; chorismate from D-erythrose 4-phosphate and phosphoenolpyruvate: step 4/7. In terms of biological role, involved in the biosynthesis of the chorismate, which leads to the biosynthesis of aromatic amino acids. Catalyzes the reversible NADPH linked reduction of 3-dehydroshikimate (DHSA) to yield shikimate (SA). The sequence is that of Shikimate dehydrogenase (NADP(+)) from Saccharophagus degradans (strain 2-40 / ATCC 43961 / DSM 17024).